Consider the following 445-residue polypeptide: UPF0210 protein Sez_0396 (445 aa).

The protein belongs to the UPF0210 family. Homodimer.

In Streptococcus equi subsp. zooepidemicus (strain MGCS10565), this protein is UPF0210 protein Sez_0396.